The following is a 537-amino-acid chain: Lysosomal cobalamin transport escort protein LMBD1 (537 aa).

At 1 to 7 (MAAAAAE) the chain is on the extracellular side. A helical transmembrane segment spans residues 8 to 28 (LVIGWCIFGLLLLAILAFCWV). The Cytoplasmic segment spans residues 29 to 47 (YVRKYQSQRESEVVSTVTA). Residues 48 to 68 (IFSLAVALITSALLPVDIFLV) traverse the membrane as a helical segment. Topologically, residues 69 to 97 (SYMKNQNGTFKDWADANVTVQIENTVLYG) are extracellular. N75 and N85 each carry an N-linked (GlcNAc...) asparagine glycan. A helical membrane pass occupies residues 98 to 118 (YYTLYSVILFCVFFWIPFVYF). The Cytoplasmic segment spans residues 119-141 (YYEEKDEDDASKCTQIKTALKYT). Residues 142–162 (LGFVVICALLLLVGAFVPLHL) traverse the membrane as a helical segment. Residues 163–185 (PNNNNSTEWEKVKLLFEDLGTGQ) are Extracellular-facing. 2 N-linked (GlcNAc...) asparagine glycosylation sites follow: N166 and N167. A helical transmembrane segment spans residues 186-206 (GLAALSFSISSLTLIGMLAAI). Residues 207 to 302 (TYTAYGMSAL…KFCGALRPLK (96 aa)) are Cytoplasmic-facing. The YERL motif; mediates interaction with adapter protein complex 2 and is essential for its function in clathrin-mediated endocytosis of INSR signature appears at 229-232 (YERL). The residue at position 235 (T235) is a Phosphothreonine. A WTKF motif; mediates interaction with adapter protein complex 2 and is essential for its function in clathrin-mediated endocytosis of INSR motif is present at residues 291–294 (WTKF). The chain crosses the membrane as a helical span at residues 303–323 (IIWGIFFILVALLFVISLFLS). Topologically, residues 324-361 (NLDKALHSAGIDSGFIIFGTNLSNPLNMLLPLLQTVFP) are extracellular. A glycan (N-linked (GlcNAc...) asparagine) is linked at N344. A helical membrane pass occupies residues 362 to 382 (LDYILITIIIMYFIFTSMAGI). Over 383-405 (RNIGIWFFWIRLYKIRRGRTRPQ) the chain is Cytoplasmic. Residues 406–426 (ALLFLCMILLLIVLHTSYMIY) traverse the membrane as a helical segment. The Extracellular portion of the chain corresponds to 427 to 483 (SLAPQYVMYGSQNYLIESNITSDAHKGNSTLAVPKRCDADAPKDQCTVTRTYIFLHK). N-linked (GlcNAc...) asparagine glycans are attached at residues N445 and N454. The helical transmembrane segment at 484–504 (FWFFSAAYYFGNWAFLVVFLI) threads the bilayer. Over 505–537 (GLIVSCCKGKKSVIEGVDEDSDLSDDEPSAYSA) the chain is Cytoplasmic. Phosphoserine occurs at positions 525 and 528.

It belongs to the LIMR family. LMBRD1 subfamily. Interacts with ABCD4; this interaction induces the translocation of ABCD4 from the endoplasmic reticulum to the lysosome. Interacts with ABCD4 and MMACHC; this interaction ensures the transport of cobalamin from the lysosome to the cytoplasm. Interacts with INSR, adapter protein complex 2 and clathrin heavy chain. Post-translationally, N-glycosylated.

It localises to the endoplasmic reticulum membrane. The protein resides in the lysosome membrane. It is found in the cell membrane. The protein localises to the cytoplasmic vesicle. Its subcellular location is the clathrin-coated vesicle. In terms of biological role, lysosomal membrane chaperone required to export cobalamin (vitamin B12) from the lysosome to the cytosol, allowing its conversion to cofactors. Targets ABCD4 transporter from the endoplasmic reticulum to the lysosome. Then forms a complex with lysosomal ABCD4 and cytoplasmic MMACHC to transport cobalamin across the lysosomal membrane. Acts as an adapter protein which plays an important role in mediating and regulating the internalization of the insulin receptor (INSR). Involved in clathrin-mediated endocytosis of INSR via its interaction with adapter protein complex 2. Essential for the initiation of gastrulation and early formation of mesoderm structures during embryogenesis. This is Lysosomal cobalamin transport escort protein LMBD1 from Mus musculus (Mouse).